Here is a 318-residue protein sequence, read N- to C-terminus: Phosphatidylglycerol--prolipoprotein diacylglyceryl transferase (318 aa).

7 consecutive transmembrane segments (helical) span residues 23–43 (PLTI…GAWL), 59–79 (MDII…YHVI), 98–118 (IWEG…GAAI), 124–146 (GVRL…AMGR), 192–212 (FQPT…LLVF), 219–239 (LGAG…RFIF), and 253–273 (LRVN…VFLI). Residue Arg146 coordinates a 1,2-diacyl-sn-glycero-3-phospho-(1'-sn-glycerol). Residues 293 to 312 (FDTRANGHDPEKHDETDGKG) show a composition bias toward basic and acidic residues. The segment at 293-318 (FDTRANGHDPEKHDETDGKGNRHHVP) is disordered.

It belongs to the Lgt family.

It is found in the cell membrane. It carries out the reaction L-cysteinyl-[prolipoprotein] + a 1,2-diacyl-sn-glycero-3-phospho-(1'-sn-glycerol) = an S-1,2-diacyl-sn-glyceryl-L-cysteinyl-[prolipoprotein] + sn-glycerol 1-phosphate + H(+). The protein operates within protein modification; lipoprotein biosynthesis (diacylglyceryl transfer). Functionally, catalyzes the transfer of the diacylglyceryl group from phosphatidylglycerol to the sulfhydryl group of the N-terminal cysteine of a prolipoprotein, the first step in the formation of mature lipoproteins. The sequence is that of Phosphatidylglycerol--prolipoprotein diacylglyceryl transferase from Paenarthrobacter aurescens (strain TC1).